A 297-amino-acid chain; its full sequence is Elongation factor Ts (297 aa).

The segment at 82–85 is involved in Mg(2+) ion dislocation from EF-Tu; the sequence is TDFV. Positions 223–265 are enriched in low complexity; sequence AQTAAAAETAPPEVSEPEPAAAVTAEEPTPEPVAAAEQPAEPV. The segment at 223-297 is disordered; it reads AQTAAAAETA…GKSRSNKKKK (75 aa). Residues 286-297 are compositionally biased toward basic residues; sequence SGGKSRSNKKKK.

Belongs to the EF-Ts family.

Its subcellular location is the cytoplasm. Associates with the EF-Tu.GDP complex and induces the exchange of GDP to GTP. It remains bound to the aminoacyl-tRNA.EF-Tu.GTP complex up to the GTP hydrolysis stage on the ribosome. This is Elongation factor Ts from Thermosynechococcus vestitus (strain NIES-2133 / IAM M-273 / BP-1).